The following is a 201-amino-acid chain: FMN-dependent NADH:quinone oxidoreductase (201 aa).

Residues Ser10, 16–18 (SQS), 96–99 (MYNF), and 140–143 (SRGG) each bind FMN.

Belongs to the azoreductase type 1 family. Homodimer. FMN is required as a cofactor.

The enzyme catalyses 2 a quinone + NADH + H(+) = 2 a 1,4-benzosemiquinone + NAD(+). It carries out the reaction N,N-dimethyl-1,4-phenylenediamine + anthranilate + 2 NAD(+) = 2-(4-dimethylaminophenyl)diazenylbenzoate + 2 NADH + 2 H(+). In terms of biological role, quinone reductase that provides resistance to thiol-specific stress caused by electrophilic quinones. Functionally, also exhibits azoreductase activity. Catalyzes the reductive cleavage of the azo bond in aromatic azo compounds to the corresponding amines. The chain is FMN-dependent NADH:quinone oxidoreductase from Yersinia enterocolitica serotype O:8 / biotype 1B (strain NCTC 13174 / 8081).